Here is a 161-residue protein sequence, read N- to C-terminus: Regulatory protein RecX (161 aa).

It belongs to the RecX family.

The protein resides in the cytoplasm. Its function is as follows. Modulates RecA activity. This chain is Regulatory protein RecX, found in Thermotoga petrophila (strain ATCC BAA-488 / DSM 13995 / JCM 10881 / RKU-1).